The following is a 268-amino-acid chain: Undecaprenyl-diphosphatase (268 aa).

7 consecutive transmembrane segments (helical) span residues 42 to 62 (VPGK…ICVL), 86 to 106 (AIFV…DFIL), 108 to 128 (VLFT…AIVV), 158 to 178 (IALV…LLVG), 184 to 204 (AAEF…VVSL), 218 to 238 (LIAA…KWLV), and 246 to 266 (FTVF…YFSL).

The protein belongs to the UppP family.

Its subcellular location is the cell inner membrane. It carries out the reaction di-trans,octa-cis-undecaprenyl diphosphate + H2O = di-trans,octa-cis-undecaprenyl phosphate + phosphate + H(+). Its function is as follows. Catalyzes the dephosphorylation of undecaprenyl diphosphate (UPP). Confers resistance to bacitracin. In Parvibaculum lavamentivorans (strain DS-1 / DSM 13023 / NCIMB 13966), this protein is Undecaprenyl-diphosphatase.